A 220-amino-acid polypeptide reads, in one-letter code: Heptaprenyl diphosphate synthase component 1 (220 aa).

As to quaternary structure, heterodimer of component I and II.

It catalyses the reaction 4 isopentenyl diphosphate + (2E,6E)-farnesyl diphosphate = all-trans-heptaprenyl diphosphate + 4 diphosphate. In terms of biological role, supplies heptaprenyl diphosphate, the precursor for the side chain of the isoprenoid quinone menaquinone-7 (MQ-7). The polypeptide is Heptaprenyl diphosphate synthase component 1 (hepS) (Geobacillus stearothermophilus (Bacillus stearothermophilus)).